Consider the following 60-residue polypeptide: uncharacterized protein (60 aa).

This is an uncharacterized protein from Dryophytes versicolor (chameleon treefrog).